Here is a 274-residue protein sequence, read N- to C-terminus: 2,3,4,5-tetrahydropyridine-2,6-dicarboxylate N-succinyltransferase (274 aa).

Residues Arg-104 and Asp-141 each coordinate substrate.

Belongs to the transferase hexapeptide repeat family. In terms of assembly, homotrimer.

It localises to the cytoplasm. It catalyses the reaction (S)-2,3,4,5-tetrahydrodipicolinate + succinyl-CoA + H2O = (S)-2-succinylamino-6-oxoheptanedioate + CoA. The protein operates within amino-acid biosynthesis; L-lysine biosynthesis via DAP pathway; LL-2,6-diaminopimelate from (S)-tetrahydrodipicolinate (succinylase route): step 1/3. The chain is 2,3,4,5-tetrahydropyridine-2,6-dicarboxylate N-succinyltransferase from Serratia proteamaculans (strain 568).